The primary structure comprises 201 residues: Oligoribonuclease (201 aa).

One can recognise an Exonuclease domain in the interval Leu20–Leu183. Residue Tyr141 is part of the active site.

It belongs to the oligoribonuclease family.

The protein resides in the cytoplasm. Its function is as follows. 3'-to-5' exoribonuclease specific for small oligoribonucleotides. This chain is Oligoribonuclease, found in Burkholderia mallei (strain NCTC 10229).